A 327-amino-acid chain; its full sequence is Inactive peptidyl-prolyl cis-trans isomerase FKBP6 (327 aa).

The PPIase FKBP-type domain maps to 54–143 (DASVLVKYSG…LFEIELLDFL (90 aa)). TPR repeat units follow at residues 171-204 (AATE…LRRR), 219-252 (LPVL…DQKN), and 253-286 (AKAL…QPFN).

This sequence belongs to the FKBP6 family. As to quaternary structure, interacts (via TPR repeats) with HSP90. Interacts with HSP72/HSPA2 and CLTC. Interacts with GAPDH; leading to inhibit GAPDH catalytic activity. As to expression, detected in all tissues examined, with higher expression in testis, heart, skeletal muscle, liver, and kidney.

It localises to the cytoplasm. The protein localises to the nucleus. In terms of biological role, has an essential role in spermatogenesis. It is required to repress transposable elements and prevent their mobilization, which is essential for the germline integrity. Acts via the piRNA metabolic process, which mediates the repression of transposable elements during meiosis by forming complexes composed of piRNAs and Piwi proteins and govern the methylation and subsequent repression of transposons. Acts as a co-chaperone via its interaction with HSP90 and is required for the piRNA amplification process, the secondary piRNA biogenesis. May be required together with HSP90 in removal of 16 nucleotide ping-pong by-products from Piwi complexes, possibly facilitating turnover of Piwi complexes. This Homo sapiens (Human) protein is Inactive peptidyl-prolyl cis-trans isomerase FKBP6 (FKBP6).